A 311-amino-acid chain; its full sequence is Ribonuclease Z (311 aa).

The Zn(2+) site is built by H61, H63, D65, H66, H148, D216, and H275. D65 serves as the catalytic Proton acceptor.

The protein belongs to the RNase Z family. As to quaternary structure, homodimer. It depends on Zn(2+) as a cofactor.

The enzyme catalyses Endonucleolytic cleavage of RNA, removing extra 3' nucleotides from tRNA precursor, generating 3' termini of tRNAs. A 3'-hydroxy group is left at the tRNA terminus and a 5'-phosphoryl group is left at the trailer molecule.. In terms of biological role, zinc phosphodiesterase, which displays some tRNA 3'-processing endonuclease activity. Probably involved in tRNA maturation, by removing a 3'-trailer from precursor tRNA. The sequence is that of Ribonuclease Z from Clostridium novyi (strain NT).